We begin with the raw amino-acid sequence, 504 residues long: MVSIRADEISNTLRERIEQYNREVKIVNTGTVLQVGDGIARIHGLDEVMAGELVEFEEGTIGIALNLESTNVGVVLMGDGLMIEEGSSVKATGRIAQIPVSEAYLGRVLNALAKPIDGRGEISASESRLIESPAPGIISRRSVYEPLQTGLVAIDSMIPIGRGQRELIIGDRQTGKTAVATDTILNQQGQNVICVYVAIGQKASSVAQVVTTLQEGGAMEYTIVVAEMADSPATLQYLAPYTGAALAEYFMYRKQHTLIIYDDLSKQAQAYRQMSLLLRRPPGREAYPGDVFYLHSRLLERAAKSNSSLGEGSMTALPIVETQSGDVSAYIPTNVISITDGQIFLSADLFNAGIRPAINVGISVSRVGSAAQTKAMKQVAGKLKLELAQFTELEAFAQFASDLDKATQSQLARGRRLRELLKQSQSAPLTVGEQIMTVYTGTKGYLDSLEIGQVSKFLDALRTHLKTNKPQFQEIISSTKTFTEEAEVLLKEAIQEQMERFLLQ.

An ATP-binding site is contributed by 170 to 177; the sequence is GDRQTGKT.

The protein belongs to the ATPase alpha/beta chains family. In terms of assembly, F-type ATPases have 2 components, CF(1) - the catalytic core - and CF(0) - the membrane proton channel. CF(1) has five subunits: alpha(3), beta(3), gamma(1), delta(1), epsilon(1). CF(0) has four main subunits: a, b, b' and c.

Its subcellular location is the plastid. The protein resides in the chloroplast thylakoid membrane. It carries out the reaction ATP + H2O + 4 H(+)(in) = ADP + phosphate + 5 H(+)(out). In terms of biological role, produces ATP from ADP in the presence of a proton gradient across the membrane. The alpha chain is a regulatory subunit. The sequence is that of ATP synthase subunit alpha, chloroplastic from Jasminum nudiflorum (Winter jasmine).